A 1272-amino-acid chain; its full sequence is RING finger protein PFE0100w (1272 aa).

Residues 216–260 (INKINDVSNNDPKKDNNEKNTSSNNITHNNYNDISNNNNNNNNIN) form a disordered region. The segment covering 234–260 (KNTSSNNITHNNYNDISNNNNNNNNIN) has biased composition (low complexity). One copy of the CHCR repeat lies at 608 to 752 (YIQTINYLET…GYKFIKYYPQ (145 aa)). A helical membrane pass occupies residues 771–791 (IFIPLFLDNIDFLFMFIVKFL). 2 disordered regions span residues 842 to 862 (NQNH…NNSQ) and 908 to 970 (ENQT…IINK). Low complexity-rich tracts occupy residues 850–861 (SDSHNLSDDNNS) and 909–956 (NQTN…IQTN). The span at 957-967 (KQKGNSTTNKI) shows a compositional bias: polar residues. Residues 1146–1182 (MNDMNKNINDKCIEIEKDKKELEKIKKKQLKKKYNFY) are a coiled coil. An RING-type; atypical zinc finger spans residues 1189–1224 (CSICKEILSVPMIHFLCKHSYHSYCLKDNNVCILCH).

The protein resides in the membrane. The protein is RING finger protein PFE0100w of Plasmodium falciparum (isolate 3D7).